The chain runs to 138 residues: ATP synthase epsilon chain (138 aa).

The protein belongs to the ATPase epsilon chain family. As to quaternary structure, F-type ATPases have 2 components, CF(1) - the catalytic core - and CF(0) - the membrane proton channel. CF(1) has five subunits: alpha(3), beta(3), gamma(1), delta(1), epsilon(1). CF(0) has three main subunits: a, b and c.

The protein localises to the cell inner membrane. Produces ATP from ADP in the presence of a proton gradient across the membrane. This chain is ATP synthase epsilon chain, found in Vesicomyosocius okutanii subsp. Calyptogena okutanii (strain HA).